An 811-amino-acid chain; its full sequence is Beta-catenin homolog sys-1 (811 aa).

A disordered region spans residues 1 to 105 (MHSTGEPQRG…SRGPAAPAQN (105 aa)). Low complexity predominate over residues 64-103 (QQQQMTPQALSTQQQQQVQQQQQRQLYSSPSPSRGPAAPA).

As to quaternary structure, interacts with TCF transcription factor pop-1 (via N-terminal region); interaction is direct.

Its subcellular location is the nucleus. It localises to the cytoplasm. It is found in the cytoplasmic granule. The protein resides in the cytoskeleton. The protein localises to the microtubule organizing center. Its subcellular location is the centrosome. It localises to the chromosome. It is found in the centromere. The protein resides in the kinetochore. Its function is as follows. Transcription coregulator. Part of the Wnt signaling asymmetry pathway, probably acting downstream of putative frizzled ligand mom-2, Wnt/frizzled receptors lin-17 and mom-5, and dishevelled homolog dsh-2. Activates or represses target gene expression, depending on upstream Wnt signals and interactions with transcription factors, such as pop-1. Required for the activation of Wnt-responsive genes in the E blastomere; thereby leading to a role in endoderm specification and gut development. Reciprocal distribution patterns of sys-1 and pop-1/TCF in the daughters of anterior-posterior cell divisions functions in specifying cell fate; a higher sys-1 to pop-1 ratio promotes the posterior cell fate, whereas a low sys-1 to pop-1 ratio promotes the anterior fate. Represses expression of homeobox ttx-3 in neuroblasts of the SIAD/SIBV lineage, perhaps acting by blocking its transcriptional activation by a complex consisting of ref-2 and pop-1. Required for early organization of the hermaphrodite, but not the male, gonad; involved in generation of regulatory cells, known as the distal tip cells (DTC), and in formation of the somatic gonadal primordium. Involved in regulating asymmetric divisions of the somatic gonadal precursor cells (SGP), Z1 and Z4. This Caenorhabditis elegans protein is Beta-catenin homolog sys-1.